Reading from the N-terminus, the 362-residue chain is DNA polymerase IV (362 aa).

Positions 6–187 constitute a UmuC domain; it reads IIHVDMDAFY…LPVSSFHGVG (182 aa). The Mg(2+) site is built by Asp10 and Asp105. Residue Glu106 is part of the active site.

The protein belongs to the DNA polymerase type-Y family. In terms of assembly, monomer. Mg(2+) is required as a cofactor.

It is found in the cytoplasm. The catalysed reaction is DNA(n) + a 2'-deoxyribonucleoside 5'-triphosphate = DNA(n+1) + diphosphate. Poorly processive, error-prone DNA polymerase involved in untargeted mutagenesis. Copies undamaged DNA at stalled replication forks, which arise in vivo from mismatched or misaligned primer ends. These misaligned primers can be extended by PolIV. Exhibits no 3'-5' exonuclease (proofreading) activity. May be involved in translesional synthesis, in conjunction with the beta clamp from PolIII. The protein is DNA polymerase IV of Leptospira interrogans serogroup Icterohaemorrhagiae serovar Lai (strain 56601).